The sequence spans 155 residues: dCTP deaminase (155 aa).

DCTP-binding positions include 79-84 (RSSLAR), D95, Q124, and Y138.

It belongs to the dCTP deaminase family. As to quaternary structure, homotrimer.

The enzyme catalyses dCTP + H2O + H(+) = dUTP + NH4(+). Its pathway is pyrimidine metabolism; dUMP biosynthesis; dUMP from dCTP (dUTP route): step 1/2. In terms of biological role, catalyzes the deamination of dCTP to dUTP. This Thermococcus kodakarensis (strain ATCC BAA-918 / JCM 12380 / KOD1) (Pyrococcus kodakaraensis (strain KOD1)) protein is dCTP deaminase.